Consider the following 376-residue polypeptide: NifS-like protein (376 aa).

Pyridoxal 5'-phosphate contacts are provided by residues 58 to 59 and 184 to 186; these read SE and SLN.

It belongs to the class-V pyridoxal-phosphate-dependent aminotransferase family. NifS/IscS subfamily. It depends on pyridoxal 5'-phosphate as a cofactor.

The protein resides in the virion. The chain is NifS-like protein from African swine fever virus (isolate Tick/Malawi/Lil 20-1/1983) (ASFV).